Consider the following 107-residue polypeptide: Replication initiation control protein YabA (107 aa).

Zn(2+) is bound by residues His-81, Cys-83, Cys-97, and Cys-100.

Belongs to the YabA family. Homotetramer. Interacts with both DnaA and DnaN, acting as a bridge between these two proteins. Zn(2+) is required as a cofactor.

The protein resides in the cytoplasm. The protein localises to the nucleoid. In terms of biological role, involved in control of chromosome replication initiation. Inhibits the cooperative binding of DnaA to the oriC region, thus negatively regulating initiation of chromosome replication. Inhibits the ability of DnaA-ATP to form a helix on DNA; does not disassemble preformed DnaA-DNA helices. Decreases the residence time of DnaA on the chromosome at its binding sites (oriC, replication forks and promoter-binding sites). Tethers DnaA to the replication machinery via the DNA polymerase beta sliding clamp subunit (dnaN). Associates with oriC and other DnaA targets on the chromosome in a DnaA-dependent manner. In Streptococcus pyogenes serotype M1, this protein is Replication initiation control protein YabA.